A 383-amino-acid polypeptide reads, in one-letter code: L-aspartate/L-glutamate decarboxylase (383 aa).

K232 is modified (N6-(pyridoxal phosphate)lysine).

This sequence belongs to the group II decarboxylase family. MfnA subfamily. In terms of assembly, monomer. Pyridoxal 5'-phosphate serves as cofactor.

It carries out the reaction L-aspartate + H(+) = beta-alanine + CO2. It catalyses the reaction L-glutamate + H(+) = 4-aminobutanoate + CO2. The enzyme catalyses L-cysteate + H(+) = taurine + CO2. The catalysed reaction is 3-sulfino-L-alanine + H(+) = hypotaurine + CO2. It participates in cofactor biosynthesis; coenzyme A biosynthesis. Functionally, catalyzes the decarboxylation of L-aspartate to produce beta-alanine, and the decarboxylation of L-glutamate to produce 4-aminobutanoate. Can also use cysteate and, to a lesser extent, cysteine sulfite (3-sulfino-L-alanine), but not L-tyrosine. Specific activities toward L-aspartate and cysteate are higher than toward L-glutamate. The sequence is that of L-aspartate/L-glutamate decarboxylase from Pyrococcus horikoshii (strain ATCC 700860 / DSM 12428 / JCM 9974 / NBRC 100139 / OT-3).